Consider the following 76-residue polypeptide: Immune protein Tsi5 (76 aa).

A run of 2 helical transmembrane segments spans residues 19–39 and 43–63; these read LLMTLVCIPLALLYVCLEWFF and WVTVGVFFGVLVVLRLGLYLY.

The protein localises to the membrane. Immunity protein that plays a role in preventing early activation of toxin Tse5. This Pseudomonas aeruginosa (strain ATCC 15692 / DSM 22644 / CIP 104116 / JCM 14847 / LMG 12228 / 1C / PRS 101 / PAO1) protein is Immune protein Tsi5.